A 555-amino-acid polypeptide reads, in one-letter code: Urocanate hydratase (555 aa).

NAD(+)-binding positions include 52–53, Gln130, 176–178, Glu196, Arg201, 242–243, 263–267, 273–274, and Tyr322; these read GG, GMG, NA, QTSAH, and YL. Cys410 is a catalytic residue. Position 492 (Gly492) interacts with NAD(+).

It belongs to the urocanase family. The cofactor is NAD(+).

The protein localises to the cytoplasm. The enzyme catalyses 4-imidazolone-5-propanoate = trans-urocanate + H2O. The protein operates within amino-acid degradation; L-histidine degradation into L-glutamate; N-formimidoyl-L-glutamate from L-histidine: step 2/3. Functionally, catalyzes the conversion of urocanate to 4-imidazolone-5-propionate. The sequence is that of Urocanate hydratase from Shewanella putrefaciens (strain CN-32 / ATCC BAA-453).